Consider the following 248-residue polypeptide: Probable 2-oxo-3-(5-oxofuran-2-ylidene)propanoate lactonase (248 aa).

Residues cysteine 123, aspartate 180, and histidine 212 contribute to the active site.

It belongs to the dienelactone hydrolase family.

It carries out the reaction 2-oxo-3-(5-oxofuran-2-ylidene)propanoate + H2O = 3-maleylpyruvate + H(+). Its function is as follows. Involved in the 5-nitroanthranilic acid (5NAA) degradation. Catalyzes the hydrolysis of the lactone to produce maleylpyruvate biodegradation of 5-nitroanthranilate. This is Probable 2-oxo-3-(5-oxofuran-2-ylidene)propanoate lactonase (naaC) from Bradyrhizobium sp.